We begin with the raw amino-acid sequence, 290 residues long: Membrane-spanning 4-domains subfamily A member 8 (290 aa).

Residues Met1–Lys21 show a composition bias toward polar residues. The interval Met1–Pro25 is disordered. The Cytoplasmic portion of the chain corresponds to Met1–Gln108. A helical transmembrane segment spans residues Val109–Ile129. Residues Thr130–Pro138 are Extracellular-facing. Residues Val139–Leu159 form a helical membrane-spanning segment. Residues Ser160–Asn174 are Cytoplasmic-facing. The chain crosses the membrane as a helical span at residues Gly175–Ile195. At Thr196–Thr220 the chain is on the extracellular side. Residues Gly221–Val241 traverse the membrane as a helical segment. At Ser242 to Arg290 the chain is on the cytoplasmic side.

The protein belongs to the MS4A family. Expressed strongly in intestine and colon and minimally in lung and ovary.

The protein resides in the membrane. May be involved in signal transduction as a component of a multimeric receptor complex. This Mus musculus (Mouse) protein is Membrane-spanning 4-domains subfamily A member 8 (Ms4a8).